Consider the following 107-residue polypeptide: ATP-dependent Clp protease adapter protein ClpS (107 aa).

Belongs to the ClpS family. In terms of assembly, binds to the N-terminal domain of the chaperone ClpA.

Functionally, involved in the modulation of the specificity of the ClpAP-mediated ATP-dependent protein degradation. The chain is ATP-dependent Clp protease adapter protein ClpS from Acinetobacter baylyi (strain ATCC 33305 / BD413 / ADP1).